A 188-amino-acid polypeptide reads, in one-letter code: Adenylate kinase (188 aa).

ATP is bound at residue 11–16 (GAGKGT). The segment at 31 to 60 (STGDIFRANIKDQTELGREAQRYTDAGNLV) is NMP. AMP contacts are provided by residues Thr-32, Arg-37, 58 to 60 (NLV), 86 to 89 (GYPR), and Gln-93. Residues 127–137 (GRAQEQGRTDD) form an LID region. Arg-128 provides a ligand contact to ATP. Residues Arg-134 and Arg-145 each coordinate AMP. Residue Gly-173 participates in ATP binding.

It belongs to the adenylate kinase family. In terms of assembly, monomer.

It localises to the cytoplasm. It catalyses the reaction AMP + ATP = 2 ADP. It functions in the pathway purine metabolism; AMP biosynthesis via salvage pathway; AMP from ADP: step 1/1. Functionally, catalyzes the reversible transfer of the terminal phosphate group between ATP and AMP. Plays an important role in cellular energy homeostasis and in adenine nucleotide metabolism. The polypeptide is Adenylate kinase (Kocuria rhizophila (strain ATCC 9341 / DSM 348 / NBRC 103217 / DC2201)).